Here is a 167-residue protein sequence, read N- to C-terminus: Peptidoglycan-binding-like protein (167 aa).

The first 24 residues, 1–24 (MRSPKVKFLTIFTLSILITKMSFA), serve as a signal peptide directing secretion.

It belongs to the IagB/IpgF/P19 family.

It is found in the periplasm. The protein is Peptidoglycan-binding-like protein (pbl) of Escherichia coli O157:H7.